The sequence spans 1070 residues: Envelopment polyprotein (1070 aa).

Positions 1-17 (MMFSRVMQLALICAVTC) are cleaved as a signal peptide. Residues 18 to 457 (EDNPCLWERF…SNPQCYPYGK (440 aa)) lie on the Lumenal side of the membrane. 8 disulfide bridges follow: cysteine 22–cysteine 55, cysteine 152–cysteine 165, cysteine 211–cysteine 221, cysteine 267–cysteine 309, cysteine 296–cysteine 301, cysteine 353–cysteine 356, cysteine 360–cysteine 429, and cysteine 380–cysteine 385. Asparagine 269 carries an N-linked (GlcNAc...) asparagine; by host glycan. The chain crosses the membrane as a helical span at residues 458–478 (WFLLFLILATLYIIVALLKTI). At 479 to 536 (MRIFMACLSVLYGPFIIIIKISRCLGRLGKRKGERTYVRLMEALDDERKPEVVRAPVS) the chain is on the cytoplasmic side. The tract at residues 480-522 (RIFMACLSVLYGPFIIIIKISRCLGRLGKRKGERTYVRLMEAL) is golgi retention signal. The segment at 541-560 (KQPRIVLFIVLALLVHMALC) is internal signal sequence for glycoprotein C. Residues 550–560 (VLALLVHMALC) constitute a propeptide that is removed on maturation. The Lumenal portion of the chain corresponds to 550-1023 (VLALLVHMAL…NWLDTLFGAS (474 aa)). 10 disulfides stabilise this stretch: cysteine 561–cysteine 602, cysteine 574–cysteine 584, cysteine 642–cysteine 831, cysteine 648–cysteine 696, cysteine 654–cysteine 703, cysteine 659–cysteine 685, cysteine 689–cysteine 694, cysteine 799–cysteine 813, cysteine 896–cysteine 966, and cysteine 906–cysteine 909. Residues 648–654 (CRWAGSC) are fusion loop. Residues 690–701 (GGAACGCFNAAP) form a fusion loop region. The helical transmembrane segment at 1024 to 1044 (LLGKILGIGLAILSPFILILI) threads the bilayer. The Cytoplasmic portion of the chain corresponds to 1045–1070 (LRWILRVVLRRSRIRREPKYEMAKYS).

The protein belongs to the phlebovirus envelope glycoprotein family. As to quaternary structure, heterodimer with glycoprotein C. Heterodimer with glycoprotein N. Homotrimer (postfusion). Post-translationally, specific enzymatic cleavages in vivo yield mature proteins Glycoprotein C, and Glycoprotein N. Glycosylated. In terms of processing, palmitoylated.

It is found in the virion membrane. The protein resides in the host Golgi apparatus membrane. It localises to the host endoplasmic reticulum membrane. Functionally, structural component of the virion that interacts with glycoprotein C. It shields the hydrophobic fusion loops of the glycoprotein C, preventing premature fusion. The glycoprotein protrusions are arranged on an icosahedral lattice, with T=12 triangulation. They are able to attach the virion to the host cell receptor CD209/DC-SIGN and to promote fusion of membranes with the late endosome after endocytosis of the virion. Plays a role in the packaging of ribonucleoproteins during virus assembly. Structural component of the virion that interacts with glycoprotein N. Acts as a class II fusion protein that is activated upon acidification and subsequent repositioning of the glycoprotein N. The glycoprotein protrusions are arranged on an icosahedral lattice, with T=12 triangulation. They are able to attach the virion to the host cell receptor CD209/DC-SIGN and to promote fusion of membranes with the late endosome after endocytosis of the virion. The sequence is that of Envelopment polyprotein (GP) from Amblyomma variegatum (Tropical bont tick).